Reading from the N-terminus, the 468-residue chain is MFNKLSTPIHIIGGGLAGCEASWQIAQSGIPVILHEMRPQKKSEAHKTGQLAELVCSNSFRSDDSSTNAVGLLHTEMRLAKSLIMKAADANKVPAGSALAVDRDGFSKTVTAALENHPLITIKREEIQEIPENWPHIIIATGPLTSPKLAKAIQTITGTEALSFFDAIAPIIYTDSINMDICWYQSRYDKIGPEGTGKDYLNCPLNKEQYEAFVQALKNAEKTEFRDFEKTPYFDGCLPIEVMAERGLETLRHGPMKPMGLTNAHNPTVKAYAVVQLRQDNKLGTLYNMVGFQTKLKYGEQVRIFRMIPGLENAEFARLGGLHRNTYLNSPIILDQTLRLKQRPGLRFAGQITGCEGYVESSAIGLLAGRFAAAEYHYNCPCLPPLTTALGALLNHITGGHIVDEKTGRKSFQPMNINFGLFPPIASASYSGKRLPSKEKKLAKKQAITARALNTCIQWLINEEKNKL.

13 to 18 (GGGLAG) lines the FAD pocket.

It belongs to the MnmG family. TrmFO subfamily. The cofactor is FAD.

It localises to the cytoplasm. The enzyme catalyses uridine(54) in tRNA + (6R)-5,10-methylene-5,6,7,8-tetrahydrofolate + NADH + H(+) = 5-methyluridine(54) in tRNA + (6S)-5,6,7,8-tetrahydrofolate + NAD(+). The catalysed reaction is uridine(54) in tRNA + (6R)-5,10-methylene-5,6,7,8-tetrahydrofolate + NADPH + H(+) = 5-methyluridine(54) in tRNA + (6S)-5,6,7,8-tetrahydrofolate + NADP(+). Its function is as follows. Catalyzes the folate-dependent formation of 5-methyl-uridine at position 54 (M-5-U54) in all tRNAs. The protein is Methylenetetrahydrofolate--tRNA-(uracil-5-)-methyltransferase TrmFO of Bartonella henselae (strain ATCC 49882 / DSM 28221 / CCUG 30454 / Houston 1) (Rochalimaea henselae).